A 156-amino-acid polypeptide reads, in one-letter code: Sensor histidine kinase component HK2 (156 aa).

Over 1-42 (MALVLAAAGAVTVVQFRDAAHEADPDGALRGLTDDITADLVR) the chain is Extracellular. The chain crosses the membrane as a helical span at residues 43-63 (ELVTILPIVLVIAAVAAYLLS). Positions 64–120 (RAALRPVDRIRAAAQTLTTTPHPDTDAPLPVPPTDDEIAWLATTLNTMLTRLQRALA) constitute an HAMP domain. Residues 64 to 156 (RAALRPVDRI…RCAGPDPPTS (93 aa)) are Cytoplasmic-facing. The Histidine kinase; first part domain occupies 128–156 (DASHELRTPLALLTTELELRCAGPDPPTS). Phosphohistidine; by autocatalysis is present on H131.

As to quaternary structure, homodimer. Each monomer interacts with HK1 and the receiver domain of TcrA. Phosphorylated by HK1.

It is found in the cell membrane. The enzyme catalyses ATP + protein L-histidine = ADP + protein N-phospho-L-histidine.. In terms of biological role, member of the three-protein two-component system HK1/HK2/TcrA. HK2 transfers its phosphoryl group to TcrA. This chain is Sensor histidine kinase component HK2, found in Mycobacterium tuberculosis (strain ATCC 25618 / H37Rv).